The sequence spans 152 residues: MGRSISVSFGLLVVFLSLSGTGADQDCLPGWSFYEGGCYYVFDVKTWEDAEKFCQKQSNGKHLATIEWLGKANFVADLVTLNSDPRLDWIGLRVEDKRQQCSSHWTDGSAVSYENVVHNTKCFGLDQKTGYRTWVALRCELAYHFICSRVPR.

An N-terminal signal peptide occupies residues 1 to 23 (MGRSISVSFGLLVVFLSLSGTGA). Intrachain disulfides connect C27–C38, C54–C147, and C122–C139. Residues 34-148 (YEGGCYYVFD…CELAYHFICS (115 aa)) enclose the C-type lectin domain.

Heterodimer with the beta subunit (AC W5XCJ6); disulfide-linked. Expressed by the venom gland.

The protein localises to the secreted. Inhibits human breast cancer cells (MDA-MB231) migration and proliferation, as well as their adhesion to fibrinogen and fibronectin. This inhibition may be due to the binding to receptors of the integrin family, probably alpha-v/beta-3 (ITGAV/ITGB3) (40% inhibition of cell adhesion) and alpha-5/beta-1 (ITGA5/ITGB1) (by comparison with lebectin). In Macrovipera lebetinus (Levantine viper), this protein is Snaclec lebecin subunit alpha.